The sequence spans 156 residues: Small ribosomal subunit protein bS16 (156 aa).

A disordered region spans residues 114–156 (ENEPVAEAITPKKKKAAKADEAKAEDTAADAEAPAADAEAADK). Residues 130–139 (AKADEAKAED) show a composition bias toward basic and acidic residues. Residues 143 to 156 (DAEAPAADAEAADK) are compositionally biased toward low complexity.

It belongs to the bacterial ribosomal protein bS16 family.

The polypeptide is Small ribosomal subunit protein bS16 (Rhodococcus erythropolis (strain PR4 / NBRC 100887)).